Here is a 316-residue protein sequence, read N- to C-terminus: 4-hydroxy-3-methylbut-2-enyl diphosphate reductase (316 aa).

C12 contacts [4Fe-4S] cluster. 2 residues coordinate (2E)-4-hydroxy-3-methylbut-2-enyl diphosphate: H41 and H74. Dimethylallyl diphosphate contacts are provided by H41 and H74. H41 and H74 together coordinate isopentenyl diphosphate. C96 is a [4Fe-4S] cluster binding site. H124 is a (2E)-4-hydroxy-3-methylbut-2-enyl diphosphate binding site. H124 lines the dimethylallyl diphosphate pocket. H124 lines the isopentenyl diphosphate pocket. The active-site Proton donor is E126. Residue T168 coordinates (2E)-4-hydroxy-3-methylbut-2-enyl diphosphate. C198 provides a ligand contact to [4Fe-4S] cluster. (2E)-4-hydroxy-3-methylbut-2-enyl diphosphate is bound by residues S226, S227, N228, and S270. 4 residues coordinate dimethylallyl diphosphate: S226, S227, N228, and S270. Isopentenyl diphosphate-binding residues include S226, S227, N228, and S270.

Belongs to the IspH family. Requires [4Fe-4S] cluster as cofactor.

The catalysed reaction is isopentenyl diphosphate + 2 oxidized [2Fe-2S]-[ferredoxin] + H2O = (2E)-4-hydroxy-3-methylbut-2-enyl diphosphate + 2 reduced [2Fe-2S]-[ferredoxin] + 2 H(+). It catalyses the reaction dimethylallyl diphosphate + 2 oxidized [2Fe-2S]-[ferredoxin] + H2O = (2E)-4-hydroxy-3-methylbut-2-enyl diphosphate + 2 reduced [2Fe-2S]-[ferredoxin] + 2 H(+). The protein operates within isoprenoid biosynthesis; dimethylallyl diphosphate biosynthesis; dimethylallyl diphosphate from (2E)-4-hydroxy-3-methylbutenyl diphosphate: step 1/1. It participates in isoprenoid biosynthesis; isopentenyl diphosphate biosynthesis via DXP pathway; isopentenyl diphosphate from 1-deoxy-D-xylulose 5-phosphate: step 6/6. Its function is as follows. Catalyzes the conversion of 1-hydroxy-2-methyl-2-(E)-butenyl 4-diphosphate (HMBPP) into a mixture of isopentenyl diphosphate (IPP) and dimethylallyl diphosphate (DMAPP). Acts in the terminal step of the DOXP/MEP pathway for isoprenoid precursor biosynthesis. This Marinobacter nauticus (strain ATCC 700491 / DSM 11845 / VT8) (Marinobacter aquaeolei) protein is 4-hydroxy-3-methylbut-2-enyl diphosphate reductase.